A 266-amino-acid chain; its full sequence is MAKMTTLKMKERLEKELNKPNRQFAYERDSDTLSVTQNGKKVTLAIPQIIANYENDGEAAIEKIIYYVEEGFLAASGNIELKNNTANIYPVVRATSFPDTTKAGEVLLTDEHTAETKIFYAFDLGKSYRFIEKNMLEKEGLSHEEVRKAAFDNLGKLEIPLKKDSVNGNDFYFVRTNDGYDASRLLNVSFLQQMREKLTGEMVLAVPHQDVLIIGAIKDNTGYDVLAHMTMDFFADGLVPITSLPFVYNNGKLEPIFIMAKNRLKE.

It belongs to the UPF0354 family.

This is UPF0354 protein lin1649 from Listeria innocua serovar 6a (strain ATCC BAA-680 / CLIP 11262).